Consider the following 442-residue polypeptide: Histidine--tRNA ligase (442 aa).

The protein belongs to the class-II aminoacyl-tRNA synthetase family. Homodimer.

The protein resides in the cytoplasm. The enzyme catalyses tRNA(His) + L-histidine + ATP = L-histidyl-tRNA(His) + AMP + diphosphate + H(+). This is Histidine--tRNA ligase from Rhodopirellula baltica (strain DSM 10527 / NCIMB 13988 / SH1).